Consider the following 276-residue polypeptide: Rhomboid protease GlpG (276 aa).

The next 6 membrane-spanning stretches (helical) occupy residues 94-114 (GPVT…MSLI), 142-162 (IFMH…WYLG), 169-189 (LGSG…GYVQ), 192-212 (FSGP…GYVW), 229-249 (LIIF…GMSM), and 250-270 (ANGA…VDTL). The Nucleophile role is filled by S201. Residue H254 is part of the active site.

This sequence belongs to the peptidase S54 family.

It localises to the cell inner membrane. It catalyses the reaction Cleaves type-1 transmembrane domains using a catalytic dyad composed of serine and histidine that are contributed by different transmembrane domains.. In terms of biological role, rhomboid-type serine protease that catalyzes intramembrane proteolysis. This Salmonella paratyphi A (strain ATCC 9150 / SARB42) protein is Rhomboid protease GlpG.